We begin with the raw amino-acid sequence, 507 residues long: Tyrosine protein-kinase src-2 (507 aa).

Residues 1-10 show a composition bias toward basic and acidic residues; it reads MGSCIGKEDP. Positions 1–52 are disordered; it reads MGSCIGKEDPPPGATSPVHTSSTLGRESLPSHPRIPSIGPIAASSSGNTIDK. Gly-2 is lipidated: N-myristoyl glycine. Over residues 35 to 47 the composition is skewed to low complexity; sequence IPSIGPIAASSSG. In terms of domain architecture, SH3 spans 57 to 118; the sequence is SQSANFVALF…PSNYVAREKS (62 aa). Residues 124-216 form the SH2 domain; the sequence is WYFGKMRRID…GLCVNLGAPC (93 aa). One can recognise a Protein kinase domain in the interval 240–494; the sequence is VRLIRQIGAG…LQWKLEDLFN (255 aa). Residues 246–254 and Lys-268 contribute to the ATP site; that span reads IGAGQFGEV. Catalysis depends on Asp-358, which acts as the Proton acceptor. Phosphotyrosine is present on Tyr-500.

This sequence belongs to the protein kinase superfamily. Tyr protein kinase family. SRC subfamily. Mg(2+) serves as cofactor. Mn(2+) is required as a cofactor. May be phosphorylated on Tyr-500 by csk-1. In terms of tissue distribution, expressed in vulva, cells around anus and pharyngeal muscles.

The enzyme catalyses L-tyrosyl-[protein] + ATP = O-phospho-L-tyrosyl-[protein] + ADP + H(+). May be inhibited by csk-1-mediated phosphorylation at Tyr-500. Its function is as follows. Non-receptor tyrosine-protein kinase which may play a role in larval and pharynx development. Unlike src-1, does not play a role in embryonic development. In Caenorhabditis elegans, this protein is Tyrosine protein-kinase src-2.